The sequence spans 88 residues: Small ribosomal subunit protein uS17 (88 aa).

Belongs to the universal ribosomal protein uS17 family. Part of the 30S ribosomal subunit.

One of the primary rRNA binding proteins, it binds specifically to the 5'-end of 16S ribosomal RNA. In Prochlorococcus marinus (strain MIT 9515), this protein is Small ribosomal subunit protein uS17.